Consider the following 197-residue polypeptide: Small ribosomal subunit protein uS4y (197 aa).

An S4 RNA-binding domain is found at 109 to 183 (RRLQTIVFKS…VKRRNERAGA (75 aa)). A disordered region spans residues 161 to 197 (SLTSPFGGGRPGRVKRRNERAGAKKASGGDGDEDDEE).

Belongs to the universal ribosomal protein uS4 family. As to quaternary structure, binds to the translation initiation factors TIF3E1.

The chain is Small ribosomal subunit protein uS4y (RPS9C) from Arabidopsis thaliana (Mouse-ear cress).